Consider the following 339-residue polypeptide: Phenylalanine--tRNA ligase alpha subunit (339 aa).

E254 is a Mg(2+) binding site.

Belongs to the class-II aminoacyl-tRNA synthetase family. Phe-tRNA synthetase alpha subunit type 1 subfamily. In terms of assembly, tetramer of two alpha and two beta subunits. Mg(2+) serves as cofactor.

The protein localises to the cytoplasm. It carries out the reaction tRNA(Phe) + L-phenylalanine + ATP = L-phenylalanyl-tRNA(Phe) + AMP + diphosphate + H(+). In Clostridium acetobutylicum (strain ATCC 824 / DSM 792 / JCM 1419 / IAM 19013 / LMG 5710 / NBRC 13948 / NRRL B-527 / VKM B-1787 / 2291 / W), this protein is Phenylalanine--tRNA ligase alpha subunit.